A 382-amino-acid chain; its full sequence is S-adenosylmethionine synthase (382 aa).

Mg(2+) is bound at residue Glu-10. His-16 contacts ATP. Glu-44 provides a ligand contact to K(+). Residues Glu-57 and Gln-100 each contribute to the L-methionine site. Residues 166–168 (DTK), 234–237 (SGRF), Asp-245, 251–252 (RK), Ala-268, Lys-272, and Lys-276 each bind ATP. Asp-245 contributes to the L-methionine binding site. Residue Lys-276 participates in L-methionine binding.

Belongs to the AdoMet synthase family. The cofactor is Mg(2+). Requires K(+) as cofactor.

The enzyme catalyses L-methionine + ATP + H2O = S-adenosyl-L-methionine + phosphate + diphosphate. The protein operates within amino-acid biosynthesis; S-adenosyl-L-methionine biosynthesis; S-adenosyl-L-methionine from L-methionine: step 1/1. In terms of biological role, catalyzes the formation of S-adenosylmethionine from methionine and ATP. The reaction comprises two steps that are both catalyzed by the same enzyme: formation of S-adenosylmethionine (AdoMet) and triphosphate, and subsequent hydrolysis of the triphosphate. This is S-adenosylmethionine synthase (sam1) from Schizosaccharomyces pombe (strain 972 / ATCC 24843) (Fission yeast).